The following is a 178-amino-acid chain: 2-C-methyl-D-erythritol 2,4-cyclodiphosphate synthase (178 aa).

3 residues coordinate a divalent metal cation: Asp24, His26, and His61. 4-CDP-2-C-methyl-D-erythritol 2-phosphate is bound at residue Asp24–His26. Thr150–Glu153 is a 4-CDP-2-C-methyl-D-erythritol 2-phosphate binding site.

The protein belongs to the IspF family. As to quaternary structure, homotrimer. It depends on a divalent metal cation as a cofactor.

The enzyme catalyses 4-CDP-2-C-methyl-D-erythritol 2-phosphate = 2-C-methyl-D-erythritol 2,4-cyclic diphosphate + CMP. It participates in isoprenoid biosynthesis; isopentenyl diphosphate biosynthesis via DXP pathway; isopentenyl diphosphate from 1-deoxy-D-xylulose 5-phosphate: step 4/6. Functionally, involved in the biosynthesis of isopentenyl diphosphate (IPP) and dimethylallyl diphosphate (DMAPP), two major building blocks of isoprenoid compounds. Catalyzes the conversion of 4-diphosphocytidyl-2-C-methyl-D-erythritol 2-phosphate (CDP-ME2P) to 2-C-methyl-D-erythritol 2,4-cyclodiphosphate (ME-CPP) with a corresponding release of cytidine 5-monophosphate (CMP). This chain is 2-C-methyl-D-erythritol 2,4-cyclodiphosphate synthase, found in Chlamydia trachomatis serovar A (strain ATCC VR-571B / DSM 19440 / HAR-13).